Consider the following 139-residue polypeptide: D-ribose pyranase (139 aa).

Histidine 20 acts as the Proton donor in catalysis. Residues aspartate 28, histidine 106, and tyrosine 128–asparagine 130 contribute to the substrate site.

Belongs to the RbsD / FucU family. RbsD subfamily. Homodecamer.

It is found in the cytoplasm. The enzyme catalyses beta-D-ribopyranose = beta-D-ribofuranose. It functions in the pathway carbohydrate metabolism; D-ribose degradation; D-ribose 5-phosphate from beta-D-ribopyranose: step 1/2. Its function is as follows. Catalyzes the interconversion of beta-pyran and beta-furan forms of D-ribose. In Pasteurella multocida (strain Pm70), this protein is D-ribose pyranase.